We begin with the raw amino-acid sequence, 264 residues long: Apolipoprotein A-I (264 aa).

Residues Met-1–Ala-18 form the signal peptide. 2 tandem repeats follow at residues Leu-67–Gly-88 and Ser-89–Asn-110. The tract at residues Leu-67–Gln-264 is 10 X approximate tandem repeats. The residue at position 109 (Met-109) is a Methionine sulfoxide. Residues Lys-111 to Gln-121 form a 3; half-length repeat. Repeat copies occupy residues Ser-122–Val-142, Pro-144–Ala-165, Pro-166–Gly-187, Ser-188–Ala-208, and Pro-209–Lys-229. Position 193 is a methionine sulfoxide (Met-193). Residues Pro-230–Met-240 form a 9; half-length repeat. Residue Met-240 is modified to Methionine sulfoxide. Repeat 10 spans residues Pro-241–Gln-264.

The protein belongs to the apolipoprotein A1/A4/E family. Homodimer. Interacts with APOA1BP and CLU. Component of a sperm activating protein complex (SPAP), consisting of APOA1, an immunoglobulin heavy chain, an immunoglobulin light chain and albumin. Interacts with NDRG1. Interacts with SCGB3A2. Interacts with NAXE and YJEFN3. Post-translationally, glycosylated. Palmitoylated. In terms of processing, phosphorylation sites are present in the extracellular medium. In terms of tissue distribution, major protein of plasma HDL, also found in chylomicrons.

It is found in the secreted. Its function is as follows. Participates in the reverse transport of cholesterol from tissues to the liver for excretion by promoting cholesterol efflux from tissues and by acting as a cofactor for the lecithin cholesterol acyltransferase (LCAT). As part of the SPAP complex, activates spermatozoa motility. The sequence is that of Apolipoprotein A-I (Apoa1) from Heterocephalus glaber (Naked mole rat).